The sequence spans 126 residues: Fluoride-specific ion channel FluC (126 aa).

The next 4 membrane-spanning stretches (helical) occupy residues 5–25, 37–57, 65–85, and 101–121; these read ILVA…GAGV, VAIM…VVWA, LSPF…AFSL, and LYVA…LWVA. Na(+) contacts are provided by glycine 75 and threonine 78.

This sequence belongs to the fluoride channel Fluc/FEX (TC 1.A.43) family.

The protein resides in the cell inner membrane. The enzyme catalyses fluoride(in) = fluoride(out). With respect to regulation, na(+) is not transported, but it plays an essential structural role and its presence is essential for fluoride channel function. Fluoride-specific ion channel. Important for reducing fluoride concentration in the cell, thus reducing its toxicity. In Roseobacter denitrificans (strain ATCC 33942 / OCh 114) (Erythrobacter sp. (strain OCh 114)), this protein is Fluoride-specific ion channel FluC.